Here is a 205-residue protein sequence, read N- to C-terminus: Anaerobic dimethyl sulfoxide reductase chain B (205 aa).

4Fe-4S ferredoxin-type domains follow at residues 5-33 (YGFF…LTPE), 59-89 (FAYY…KRED), and 90-119 (GFVV…YNET). The [4Fe-4S] cluster site is built by Cys14, Cys17, Cys20, Cys24, Cys67, Cys70, Cys75, Cys79, Cys99, Cys102, Cys105, Cys109, Cys126, Cys129, Cys141, and Cys145. Residues 184–205 (KPNANSRPTGDTTGYLANPKEV) are disordered. The span at 186–195 (NANSRPTGDT) shows a compositional bias: polar residues.

In terms of assembly, heterotrimeric enzyme composed of a catalytic heterodimer (DmsAB) and a membrane anchor protein (DmsC). [4Fe-4S] cluster is required as a cofactor.

Electron transfer subunit of the terminal reductase during anaerobic growth on various sulfoxide and N-oxide compounds. This chain is Anaerobic dimethyl sulfoxide reductase chain B (dmsB), found in Shigella flexneri.